The following is a 145-amino-acid chain: Holo-[acyl-carrier-protein] synthase (145 aa).

Residues Asp9 and Glu59 each coordinate Mg(2+).

It belongs to the P-Pant transferase superfamily. AcpS family. Mg(2+) is required as a cofactor.

It is found in the cytoplasm. The enzyme catalyses apo-[ACP] + CoA = holo-[ACP] + adenosine 3',5'-bisphosphate + H(+). Transfers the 4'-phosphopantetheine moiety from coenzyme A to a Ser of acyl-carrier-protein. The sequence is that of Holo-[acyl-carrier-protein] synthase from Nocardia farcinica (strain IFM 10152).